The primary structure comprises 154 residues: Endoribonuclease YbeY (154 aa).

Zn(2+) is bound by residues His-116, His-120, and His-126.

The protein belongs to the endoribonuclease YbeY family. Requires Zn(2+) as cofactor.

The protein resides in the cytoplasm. Functionally, single strand-specific metallo-endoribonuclease involved in late-stage 70S ribosome quality control and in maturation of the 3' terminus of the 16S rRNA. This is Endoribonuclease YbeY from Chromohalobacter salexigens (strain ATCC BAA-138 / DSM 3043 / CIP 106854 / NCIMB 13768 / 1H11).